Here is a 223-residue protein sequence, read N- to C-terminus: Family of serine hydrolases 2 (223 aa).

Residues serine 110, aspartate 174, and histidine 203 each act as charge relay system in the active site.

It belongs to the AB hydrolase 3 family.

The protein localises to the cytoplasm. Serine hydrolase of unknown specificity. The sequence is that of Family of serine hydrolases 2 (FSH2) from Saccharomyces cerevisiae (strain ATCC 204508 / S288c) (Baker's yeast).